A 451-amino-acid polypeptide reads, in one-letter code: UPF0210 protein NGO_1297 (451 aa).

It belongs to the UPF0210 family. As to quaternary structure, homodimer.

The polypeptide is UPF0210 protein NGO_1297 (Neisseria gonorrhoeae (strain ATCC 700825 / FA 1090)).